A 182-amino-acid chain; its full sequence is Ribosome maturation factor RimM (182 aa).

One can recognise a PRC barrel domain in the interval 106–179 (EGEFHVLDLI…RIEITPPPGL (74 aa)).

This sequence belongs to the RimM family. Binds ribosomal protein uS19.

It localises to the cytoplasm. An accessory protein needed during the final step in the assembly of 30S ribosomal subunit, possibly for assembly of the head region. Essential for efficient processing of 16S rRNA. May be needed both before and after RbfA during the maturation of 16S rRNA. It has affinity for free ribosomal 30S subunits but not for 70S ribosomes. The polypeptide is Ribosome maturation factor RimM (Synechococcus elongatus (strain ATCC 33912 / PCC 7942 / FACHB-805) (Anacystis nidulans R2)).